The chain runs to 852 residues: Serine/threonine-protein phosphatase 6 regulatory subunit 3-A (852 aa).

3 disordered regions span residues 610-653 (NIAF…VNHE), 714-742 (NTKE…VNAS), and 817-852 (DSAM…NGPV). Positions 627–638 (DSEESTDSEEEE) are enriched in acidic residues. Positions 714 to 732 (NTKETIRSSSPVEMETSTE) are enriched in polar residues. Over residues 828–840 (PSSSSQEQRTSEQ) the composition is skewed to low complexity.

Belongs to the SAPS family.

Functionally, regulatory subunit of protein phosphatase 6 (PP6). May function as a scaffolding PP6 subunit. The polypeptide is Serine/threonine-protein phosphatase 6 regulatory subunit 3-A (ppp6r3-a) (Xenopus laevis (African clawed frog)).